The chain runs to 150 residues: Peptide methionine sulfoxide reductase MsrB (150 aa).

Residues E9–F132 enclose the MsrB domain. Catalysis depends on C121, which acts as the Nucleophile.

This sequence belongs to the MsrB Met sulfoxide reductase family.

The catalysed reaction is L-methionyl-[protein] + [thioredoxin]-disulfide + H2O = L-methionyl-(R)-S-oxide-[protein] + [thioredoxin]-dithiol. The polypeptide is Peptide methionine sulfoxide reductase MsrB (Mycoplasma genitalium (strain ATCC 33530 / DSM 19775 / NCTC 10195 / G37) (Mycoplasmoides genitalium)).